The sequence spans 474 residues: GTPase Der (474 aa).

2 consecutive EngA-type G domains span residues 3–167 (FTVA…GVDR) and 204–379 (LRVA…MVWN). Residues 9-16 (GRPNVGKS), 56-60 (DTAGL), 119-122 (NKSE), 210-217 (GRPNAGKS), 257-261 (DTAGM), and 322-325 (NKWD) each bind GTP. The KH-like domain maps to 380-464 (KRISTAKLNR…PIRIHLKASE (85 aa)).

It belongs to the TRAFAC class TrmE-Era-EngA-EngB-Septin-like GTPase superfamily. EngA (Der) GTPase family. In terms of assembly, associates with the 50S ribosomal subunit.

In terms of biological role, GTPase that plays an essential role in the late steps of ribosome biogenesis. In Allorhizobium ampelinum (strain ATCC BAA-846 / DSM 112012 / S4) (Agrobacterium vitis (strain S4)), this protein is GTPase Der.